The primary structure comprises 427 residues: Adenylosuccinate synthetase (427 aa).

Residues 12-18 (GDEGKGK) and 40-42 (GHT) contribute to the GTP site. Aspartate 13 (proton acceptor) is an active-site residue. Mg(2+) contacts are provided by aspartate 13 and glycine 40. Residues 13 to 16 (DEGK), 38 to 41 (NAGH), threonine 131, arginine 145, glutamine 226, threonine 241, and arginine 305 each bind IMP. Histidine 41 acts as the Proton donor in catalysis. 301–307 (ATTGRKR) is a binding site for substrate. GTP contacts are provided by residues arginine 307, 333–335 (KLD), and 415–417 (SVG).

This sequence belongs to the adenylosuccinate synthetase family. Homodimer. The cofactor is Mg(2+).

Its subcellular location is the cytoplasm. The enzyme catalyses IMP + L-aspartate + GTP = N(6)-(1,2-dicarboxyethyl)-AMP + GDP + phosphate + 2 H(+). It functions in the pathway purine metabolism; AMP biosynthesis via de novo pathway; AMP from IMP: step 1/2. Its function is as follows. Plays an important role in the de novo pathway of purine nucleotide biosynthesis. Catalyzes the first committed step in the biosynthesis of AMP from IMP. The polypeptide is Adenylosuccinate synthetase (Oleidesulfovibrio alaskensis (strain ATCC BAA-1058 / DSM 17464 / G20) (Desulfovibrio alaskensis)).